A 356-amino-acid polypeptide reads, in one-letter code: MPRPISATIHTAALANNLSVVRRHAAQSKVWAIVKANAYGHGLARVFPGLRGTDGFGLLDLDEAVKLRELGWAGPILLLEGFFRSTDIDVIDRYSLTTAVHNDEQMRMLETARLSKPVNVQLKMNSGMNRLGYTPEKYRAAWERARACPGIGQITLMTHFSDADGERGVAEQMATFERGAQGIAGARSFANSAAVLWHPSAHFDWVRPGIMLYGASPSGRAADIADRGLKPTMTLASELIAVQTLAKGQAVGYGSMFVAEDTMRIGVVACGYADGYPRIAPEGTPVVVDGVRTRIVGRVSMDMLTVDLTPVPQAGVGARVELWGETLPIDDVAARCMTVGYELMCAVAPRVPVRAE.

Lys35 serves as the catalytic Proton acceptor; specific for D-alanine. The residue at position 35 (Lys35) is an N6-(pyridoxal phosphate)lysine. Residue Arg130 coordinates substrate. Residue Tyr253 is the Proton acceptor; specific for L-alanine of the active site. A substrate-binding site is contributed by Met301.

It belongs to the alanine racemase family. The cofactor is pyridoxal 5'-phosphate.

The catalysed reaction is L-alanine = D-alanine. It participates in amino-acid biosynthesis; D-alanine biosynthesis; D-alanine from L-alanine: step 1/1. Its function is as follows. Catalyzes the interconversion of L-alanine and D-alanine. May also act on other amino acids. The sequence is that of Alanine racemase (alr) from Burkholderia mallei (strain NCTC 10229).